We begin with the raw amino-acid sequence, 524 residues long: 56 kDa type-specific antigen (524 aa).

Residues 1–22 (MKKIMLIASAMSALSLPFSASA) form the signal peptide. The helical transmembrane segment at 67 to 87 (LTTGLPFGGTLAAGMTIAPGF) threads the bilayer. Disordered regions lie at residues 112-132 (SKGE…RKRF) and 387-422 (EKLA…KGKE). Basic and acidic residues-rich tracts occupy residues 395-405 (EDAKNQGEGDC) and 413-422 (EKSKEGKGKE). A helical membrane pass occupies residues 472–492 (TGMVASGALGVAINAAEGVYV).

It is found in the cell membrane. Functionally, may be an adherent factor for rickettsial adsorption to the host-cell surface and a determinant of virulence of individual rickettsial strain. It is the major outer membrane protein. This Orientia tsutsugamushi (Rickettsia tsutsugamushi) protein is 56 kDa type-specific antigen.